The primary structure comprises 115 residues: T cell receptor beta variable 7-2 (115 aa).

The first 21 residues, 1–21 (MGTRLLFWVAFCLLGADHTGA), serve as a signal peptide directing secretion. The 94-residue stretch at 22–115 (GVSQSPSNKV…SAVYLCASSL (94 aa)) folds into the Ig-like domain. Cysteines 42 and 111 form a disulfide.

In terms of assembly, alpha-beta TR is a heterodimer composed of an alpha and beta chain; disulfide-linked. The alpha-beta TR is associated with the transmembrane signaling CD3 coreceptor proteins to form the TR-CD3 (TcR or TCR). The assembly of alpha-beta TR heterodimers with CD3 occurs in the endoplasmic reticulum where a single alpha-beta TR heterodimer associates with one CD3D-CD3E heterodimer, one CD3G-CD3E heterodimer and one CD247 homodimer forming a stable octameric structure. CD3D-CD3E and CD3G-CD3E heterodimers preferentially associate with TR alpha and TR beta chains, respectively. The association of the CD247 homodimer is the last step of TcR assembly in the endoplasmic reticulum and is required for transport to the cell surface.

The protein resides in the cell membrane. In terms of biological role, v region of the variable domain of T cell receptor (TR) beta chain that participates in the antigen recognition. Alpha-beta T cell receptors are antigen specific receptors which are essential to the immune response and are present on the cell surface of T lymphocytes. Recognize peptide-major histocompatibility (MH) (pMH) complexes that are displayed by antigen presenting cells (APC), a prerequisite for efficient T cell adaptive immunity against pathogens. Binding of alpha-beta TR to pMH complex initiates TR-CD3 clustering on the cell surface and intracellular activation of LCK that phosphorylates the ITAM motifs of CD3G, CD3D, CD3E and CD247 enabling the recruitment of ZAP70. In turn ZAP70 phosphorylates LAT, which recruits numerous signaling molecules to form the LAT signalosome. The LAT signalosome propagates signal branching to three major signaling pathways, the calcium, the mitogen-activated protein kinase (MAPK) kinase and the nuclear factor NF-kappa-B (NF-kB) pathways, leading to the mobilization of transcription factors that are critical for gene expression and essential for T cell growth and differentiation. The T cell repertoire is generated in the thymus, by V-(D)-J rearrangement. This repertoire is then shaped by intrathymic selection events to generate a peripheral T cell pool of self-MH restricted, non-autoaggressive T cells. Post-thymic interaction of alpha-beta TR with the pMH complexes shapes TR structural and functional avidity. This is T cell receptor beta variable 7-2 from Homo sapiens (Human).